The sequence spans 897 residues: Major intrinsically disordered Notch2-binding receptor 1 (897 aa).

Over 1 to 872 (MDAMPEYSLF…AEFRRAKACK (872 aa)) the chain is Cytoplasmic. Disordered regions lie at residues 405 to 433 (AKDKPTASPSGFSKKSNGSKTKDMSSVAC), 450 to 502 (SINC…EDSE), and 688 to 766 (TRRS…PPKD). 2 stretches are compositionally biased toward polar residues: residues 411 to 423 (ASPSGFSKKSNGS) and 452 to 471 (NCPSFQSSNVDNGMSVGTQT). Over residues 472–498 (EQHESRKVKDYPSQNKFKERPPFKHSE) the composition is skewed to basic and acidic residues. Over residues 697–724 (EENSATESKVASITNSPRDWRTVSYSSH) the composition is skewed to polar residues. Over residues 725 to 756 (NGEEGKERDRHSEGKERHRKSREAERQYEAHQ) the composition is skewed to basic and acidic residues. Residues 873–893 (IGALIFAAACTVILVIVVPIC) form a helical membrane-spanning segment. The Extracellular portion of the chain corresponds to 894-897 (TMKS).

Belongs to the MINAR family.

The protein resides in the cell membrane. Its function is as follows. Intrinsically disordered protein which may negatively regulate mTOR signaling pathway by stabilizing the mTOR complex component DEPTOR. Negatively regulates angiogenesis. Negatively regulates cell growth. May play a role in neuronal development. This Danio rerio (Zebrafish) protein is Major intrinsically disordered Notch2-binding receptor 1 (minar1).